A 305-amino-acid chain; its full sequence is Olfactory receptor 4B13 (305 aa).

The Extracellular portion of the chain corresponds to 1–25 (MANKNNVTELIFTGLFQDPEVQKVC). Residue N6 is glycosylated (N-linked (GlcNAc...) asparagine). Residues 26–46 (FVLFLPVYLATLLGNSLILVA) traverse the membrane as a helical segment. Topologically, residues 47-55 (VSISKTLHS) are cytoplasmic. Residues 56–76 (PMYFFLSSLSLVEICYSSTIV) form a helical membrane-spanning segment. The Extracellular segment spans residues 77-95 (PKFITDLLAKVKTISLKGC). An intrachain disulfide couples C95 to C187. The helical transmembrane segment at 96–116 (LTQIFFSHFFGVVEVILLVVM) threads the bilayer. Topologically, residues 117 to 141 (AYDRYVAICKPLHYMNIMSRQVCHM) are cytoplasmic. Residues 142-162 (LVAGSWLGGFIHSIIQIIITI) traverse the membrane as a helical segment. Topologically, residues 163 to 202 (PLPFCGPNVIDHYFCDLQQLFKLACTDTFMEGFIVMANSG) are extracellular. Residues 203–223 (LISIVSLFILVSSYAVILISL) form a helical membrane-spanning segment. At 224–236 (RKRSAEGRRKALS) the chain is on the cytoplasmic side. The chain crosses the membrane as a helical span at residues 237–257 (TCASHITVVILFFVPGAFIYM). Topologically, residues 258-266 (RPSSTFTED) are extracellular. The helical transmembrane segment at 267–287 (KLVSVFYTVITPMLNPIVYTL) threads the bilayer. Over 288-305 (RNTEMKNAIRMSWKQKDS) the chain is Cytoplasmic.

This sequence belongs to the G-protein coupled receptor 1 family.

Its subcellular location is the cell membrane. In terms of biological role, odorant receptor. This is Olfactory receptor 4B13 from Mus musculus (Mouse).